Reading from the N-terminus, the 912-residue chain is Protein translocase subunit SecA (912 aa).

ATP is bound by residues glutamine 87, 105–109, and aspartate 508; that span reads GEGKT. A disordered region spans residues 865 to 912; sequence DEEAAQVQSGNAPVPVSQVTRDEPKVGRNDPCPCGSGKKYKHCHGQLS. Cysteine 896, cysteine 898, cysteine 907, and histidine 908 together coordinate Zn(2+). Residues 902–912 are compositionally biased toward basic residues; the sequence is KKYKHCHGQLS.

The protein belongs to the SecA family. As to quaternary structure, monomer and homodimer. Part of the essential Sec protein translocation apparatus which comprises SecA, SecYEG and auxiliary proteins SecDF-YajC and YidC. The cofactor is Zn(2+).

The protein localises to the cell inner membrane. It localises to the cytoplasm. The catalysed reaction is ATP + H2O + cellular proteinSide 1 = ADP + phosphate + cellular proteinSide 2.. Part of the Sec protein translocase complex. Interacts with the SecYEG preprotein conducting channel. Has a central role in coupling the hydrolysis of ATP to the transfer of proteins into and across the cell membrane, serving both as a receptor for the preprotein-SecB complex and as an ATP-driven molecular motor driving the stepwise translocation of polypeptide chains across the membrane. This is Protein translocase subunit SecA from Xanthomonas oryzae pv. oryzae (strain MAFF 311018).